The sequence spans 93 residues: Acylphosphatase (93 aa).

Positions 6-93 constitute an Acylphosphatase-like domain; sequence RARIVVSGRV…GDLGAFEIRF (88 aa). Residues R21 and N39 contribute to the active site.

It belongs to the acylphosphatase family.

The enzyme catalyses an acyl phosphate + H2O = a carboxylate + phosphate + H(+). The sequence is that of Acylphosphatase (acyP) from Anaeromyxobacter dehalogenans (strain 2CP-C).